We begin with the raw amino-acid sequence, 40 residues long: Photosystem II reaction center protein J (40 aa).

A helical transmembrane segment spans residues 8 to 28; sequence IPLWIIGTVTGIFGIGLIGIF.

The protein belongs to the PsbJ family. PSII is composed of 1 copy each of membrane proteins PsbA, PsbB, PsbC, PsbD, PsbE, PsbF, PsbH, PsbI, PsbJ, PsbK, PsbL, PsbM, PsbT, PsbX, PsbY, PsbZ, Psb30/Ycf12, at least 3 peripheral proteins of the oxygen-evolving complex and a large number of cofactors. It forms dimeric complexes.

Its subcellular location is the plastid membrane. Its function is as follows. One of the components of the core complex of photosystem II (PSII). PSII is a light-driven water:plastoquinone oxidoreductase that uses light energy to abstract electrons from H(2)O, generating O(2) and a proton gradient subsequently used for ATP formation. It consists of a core antenna complex that captures photons, and an electron transfer chain that converts photonic excitation into a charge separation. This Cuscuta reflexa (Southern Asian dodder) protein is Photosystem II reaction center protein J.